The chain runs to 130 residues: Small ribosomal subunit protein uS8A (130 aa).

The protein belongs to the universal ribosomal protein uS8 family. Component of the small ribosomal subunit (SSU). Mature yeast ribosomes consist of a small (40S) and a large (60S) subunit. The 40S small subunit contains 1 molecule of ribosomal RNA (18S rRNA) and 33 different proteins (encoded by 57 genes). The large 60S subunit contains 3 rRNA molecules (25S, 5.8S and 5S rRNA) and 46 different proteins (encoded by 81 genes).

It localises to the cytoplasm. In terms of biological role, component of the ribosome, a large ribonucleoprotein complex responsible for the synthesis of proteins in the cell. The small ribosomal subunit (SSU) binds messenger RNAs (mRNAs) and translates the encoded message by selecting cognate aminoacyl-transfer RNA (tRNA) molecules. The large subunit (LSU) contains the ribosomal catalytic site termed the peptidyl transferase center (PTC), which catalyzes the formation of peptide bonds, thereby polymerizing the amino acids delivered by tRNAs into a polypeptide chain. The nascent polypeptides leave the ribosome through a tunnel in the LSU and interact with protein factors that function in enzymatic processing, targeting, and the membrane insertion of nascent chains at the exit of the ribosomal tunnel. In Saccharomyces cerevisiae (strain ATCC 204508 / S288c) (Baker's yeast), this protein is Small ribosomal subunit protein uS8A.